Reading from the N-terminus, the 453-residue chain is MARPPVVGVFTERKPMRAWDAPASVTLPGQAALPRIFDTAAGEIVQVQEDKAASLYVCGITPYDATHMGHASTYVAFDLLHRAWLDAGVPVTYVQNVTDVDDPLLERATATNVDWRELAEDQTELFRTDMKALNVIPPAHYVGVVESIEWLFPLIEDLFRRGLAYRVPGFTDEQGVVHPDGDVYLDLKAVRELPANAEGYSWAPGEVCHLTRDEMLEIFAERGGDPNRAGKRDALDPLLWRVEREGEPSWDAGELGAGRPGWHIECTMIARRFVDGSLTVQAGGNDLTFPHHDLGAGHSWAVSARPHAKHYAHTGMVGLDGHKMSKSRGNLVLVSRLRAAGEDANAVRLAIMGQHYRSDWFWTDELLEHAKARLDTYRHAVSVAEGREGSEGVTDEAAVELLTTVREALGEDLNAPAALAAVDAWAVKALADTTVGGGALVRDILAARLGVVL.

Residue cysteine 58 coordinates Zn(2+). Residues 58-61, threonine 73, and 96-98 each bind L-cysteinyl-5'-AMP; these read CGIT and NVT. A 'HIGH' region motif is present at residues 60–70; the sequence is ITPYDATHMGH. Residues 221–226 carry the 'ERGGDP' region motif; that stretch reads ERGGDP. Tryptophan 262 contributes to the L-cysteinyl-5'-AMP binding site. Cysteine 266 lines the Zn(2+) pocket. 284–286 provides a ligand contact to L-cysteinyl-5'-AMP; the sequence is GND. Residue histidine 291 participates in Zn(2+) binding. L-cysteinyl-5'-AMP is bound at residue valine 317. Positions 323–327 match the 'KMSKS' region motif; it reads KMSKS.

This sequence belongs to the class-I aminoacyl-tRNA synthetase family. MshC subfamily. As to quaternary structure, monomer. It depends on Zn(2+) as a cofactor.

The enzyme catalyses 1D-myo-inositol 2-amino-2-deoxy-alpha-D-glucopyranoside + L-cysteine + ATP = 1D-myo-inositol 2-(L-cysteinylamino)-2-deoxy-alpha-D-glucopyranoside + AMP + diphosphate + H(+). In terms of biological role, catalyzes the ATP-dependent condensation of GlcN-Ins and L-cysteine to form L-Cys-GlcN-Ins. This Rothia mucilaginosa (strain DY-18) (Stomatococcus mucilaginosus) protein is L-cysteine:1D-myo-inositol 2-amino-2-deoxy-alpha-D-glucopyranoside ligase.